The chain runs to 938 residues: AP-2 complex subunit alpha-2 (938 aa).

A 1,2-diacyl-sn-glycero-3-phospho-(1D-myo-inositol-3,4,5-trisphosphate) is bound by residues 11–12, K43, Y53, and 57–61; these read RG and KYVCK. A disordered region spans residues 616 to 677; the sequence is LKKKKGPSTV…APPVPAGPPP (62 aa). Residues 645-668 are compositionally biased toward low complexity; sequence PALASTSAVSTPSPSADLLGLGAA.

Belongs to the adaptor complexes large subunit family. In terms of assembly, adaptor protein complex 2 (AP-2) is a heterotetramer composed of two large adaptins (alpha-type subunit AP2A1 or AP2A2 and beta-type subunit AP2B1), a medium adaptin (mu-type subunit AP2M1) and a small adaptin (sigma-type subunit AP2S1). Binds clathrin. Binds EPN1, EPS15, AMPH, SNAP91 and BIN1. Interacts with HIP1. Interacts with DGKD. Interacts with DENND1A, DENND1B and DENND1C. Interacts with FCHO1. Interacts with ATAT1; this interaction is required for efficient alpha-tubulin acetylation by ATAT1. Interacts with KIAA1107. Together with AP2B1 and AP2M1, it interacts with ADAM10; this interaction facilitates ADAM10 endocytosis from the plasma membrane during long-term potentiation in hippocampal neurons. Interacts with CLN3 (via dileucine motif). Interacts with ABCB11; this interaction regulates cell membrane expression of ABCB11 through its internalization in a clathrin-dependent manner and its subsequent degradation. Interacts with DNAJC6.

The protein resides in the cell membrane. Its subcellular location is the membrane. It localises to the coated pit. In terms of biological role, component of the adaptor protein complex 2 (AP-2). Adaptor protein complexes function in protein transport via transport vesicles in different membrane traffic pathways. Adaptor protein complexes are vesicle coat components and appear to be involved in cargo selection and vesicle formation. AP-2 is involved in clathrin-dependent endocytosis in which cargo proteins are incorporated into vesicles surrounded by clathrin (clathrin-coated vesicles, CCVs) which are destined for fusion with the early endosome. The clathrin lattice serves as a mechanical scaffold but is itself unable to bind directly to membrane components. Clathrin-associated adaptor protein (AP) complexes which can bind directly to both the clathrin lattice and to the lipid and protein components of membranes are considered to be the major clathrin adaptors contributing the CCV formation. AP-2 also serves as a cargo receptor to selectively sort the membrane proteins involved in receptor-mediated endocytosis. AP-2 seems to play a role in the recycling of synaptic vesicle membranes from the presynaptic surface. AP-2 recognizes Y-X-X-[FILMV] (Y-X-X-Phi) and [ED]-X-X-X-L-[LI] endocytosis signal motifs within the cytosolic tails of transmembrane cargo molecules. AP-2 may also play a role in maintaining normal post-endocytic trafficking through the ARF6-regulated, non-clathrin pathway. During long-term potentiation in hippocampal neurons, AP-2 is responsible for the endocytosis of ADAM10. The AP-2 alpha subunit binds polyphosphoinositide-containing lipids, positioning AP-2 on the membrane. The AP-2 alpha subunit acts via its C-terminal appendage domain as a scaffolding platform for endocytic accessory proteins. The AP-2 alpha and AP-2 sigma subunits are thought to contribute to the recognition of the [ED]-X-X-X-L-[LI] motif. This is AP-2 complex subunit alpha-2 from Bos taurus (Bovine).